A 286-amino-acid chain; its full sequence is ATP synthase gamma chain (286 aa).

Belongs to the ATPase gamma chain family. In terms of assembly, F-type ATPases have 2 components, CF(1) - the catalytic core - and CF(0) - the membrane proton channel. CF(1) has five subunits: alpha(3), beta(3), gamma(1), delta(1), epsilon(1). CF(0) has three main subunits: a, b and c.

The protein resides in the cell membrane. Produces ATP from ADP in the presence of a proton gradient across the membrane. The gamma chain is believed to be important in regulating ATPase activity and the flow of protons through the CF(0) complex. In Ureaplasma urealyticum serovar 10 (strain ATCC 33699 / Western), this protein is ATP synthase gamma chain.